Here is a 478-residue protein sequence, read N- to C-terminus: Alcohol dehydrogenase (quinone), cytochrome c subunit (478 aa).

The first 36 residues, 1-36 (MLNALTRDRLVSEMKQGWKLAAAIGLMAVSFGAAHA), serve as a signal peptide directing secretion. Gln-37 is modified (pyrrolidone carboxylic acid). Cytochrome c domains are found at residues 42–145 (ALIK…MHGV), 189–304 (PEVA…KSMP), and 327–417 (GQGN…RKGW). Cys-56, Cys-59, His-60, Cys-204, Cys-207, His-208, Cys-340, Cys-343, and His-344 together coordinate heme c.

As to quaternary structure, the alcohol dehydrogenase multicomponent enzyme system is composed of a dehydrogenase subunit I (AdhA), a cytochrome c subunit II (AdhB) and a subunit III (AdhS). The cofactor is heme c.

Its subcellular location is the cell membrane. The enzyme catalyses ethanol + a ubiquinone = a ubiquinol + acetaldehyde. 2,6-dichloro-4-dicyanovinylphenol (PC16) and antimycin A inhibit ubiquinol oxidation activity more selectively than the ubiquinone reductase activity. Its function is as follows. Cytochrome c component of the alcohol dehydrogenase multicomponent enzyme system which is involved in the production of acetic acid and in the ethanol oxidase respiratory chain. Quinohemoprotein alcohol dehydrogenase (ADH) catalyzes the oxidation of ethanol to acetaldehyde by transferring electrons to the ubiquinone embedded in the membrane phospholipids. The electrons transfer from ethanol to membranous ubiquinone occurs from pyrroloquinoline quinone (PQQ) to one heme c in subunit I (AdhA), and finally to two heme c in subunit II (AdhB). Besides ubiquinone reduction, ADH also has a ubiquinol (QH2) oxidation reaction which mediates electron transfer from ubiquinol to the non-energy generating bypass oxidase system. The electrons transfer occurs from ubiquinol (QH2) to the additional heme c within subunit II (AdhB). Also able to use quinone analogs such as 2,3-dimethoxy-5-methyl-6-n-decyl-1,4-benzoquinone (DB) and 2,3-dimethoxy-5-methyl-6-n-pentyl-1,4-benzoquinone (PB). The chain is Alcohol dehydrogenase (quinone), cytochrome c subunit from Gluconobacter oxydans (strain 621H) (Gluconobacter suboxydans).